An 884-amino-acid chain; its full sequence is Alanine--tRNA ligase (884 aa).

Residues H572, H576, C673, and H677 each contribute to the Zn(2+) site.

It belongs to the class-II aminoacyl-tRNA synthetase family. Zn(2+) serves as cofactor.

Its subcellular location is the cytoplasm. The enzyme catalyses tRNA(Ala) + L-alanine + ATP = L-alanyl-tRNA(Ala) + AMP + diphosphate. Catalyzes the attachment of alanine to tRNA(Ala) in a two-step reaction: alanine is first activated by ATP to form Ala-AMP and then transferred to the acceptor end of tRNA(Ala). Also edits incorrectly charged Ser-tRNA(Ala) and Gly-tRNA(Ala) via its editing domain. The protein is Alanine--tRNA ligase of Xylella fastidiosa (strain M23).